The following is a 139-amino-acid chain: Protein Turandot B (139 aa).

The first 21 residues, 1-21, serve as a signal peptide directing secretion; it reads MNFKTALICFALLLIGTLCSA.

Belongs to the Turandot family.

It is found in the secreted. Functionally, a humoral factor that may play a role in stress tolerance. The sequence is that of Protein Turandot B from Drosophila sechellia (Fruit fly).